A 95-amino-acid chain; its full sequence is Co-chaperonin GroES (95 aa).

It belongs to the GroES chaperonin family. In terms of assembly, heptamer of 7 subunits arranged in a ring. Interacts with the chaperonin GroEL.

The protein localises to the cytoplasm. Functionally, together with the chaperonin GroEL, plays an essential role in assisting protein folding. The GroEL-GroES system forms a nano-cage that allows encapsulation of the non-native substrate proteins and provides a physical environment optimized to promote and accelerate protein folding. GroES binds to the apical surface of the GroEL ring, thereby capping the opening of the GroEL channel. The chain is Co-chaperonin GroES from Desulforapulum autotrophicum (strain ATCC 43914 / DSM 3382 / VKM B-1955 / HRM2) (Desulfobacterium autotrophicum).